A 213-amino-acid chain; its full sequence is tRNA (guanine-N(7)-)-methyltransferase (213 aa).

S-adenosyl-L-methionine-binding residues include Glu-43, Asp-68, Asn-95, and Asn-117. Substrate contacts are provided by residues Asp-153 and 190 to 193 (TEYE).

This sequence belongs to the class I-like SAM-binding methyltransferase superfamily. TrmB family.

It carries out the reaction guanosine(46) in tRNA + S-adenosyl-L-methionine = N(7)-methylguanosine(46) in tRNA + S-adenosyl-L-homocysteine. The protein operates within tRNA modification; N(7)-methylguanine-tRNA biosynthesis. Functionally, catalyzes the formation of N(7)-methylguanine at position 46 (m7G46) in tRNA. The sequence is that of tRNA (guanine-N(7)-)-methyltransferase from Desulfitobacterium hafniense (strain DSM 10664 / DCB-2).